The chain runs to 804 residues: Chondroitin sulfate synthase mig-22 (804 aa).

The Cytoplasmic segment spans residues 1 to 6 (MVGGGR). The chain crosses the membrane as a helical; Signal-anchor for type II membrane protein span at residues 7-27 (TGIHLLLGFLIGAALALFFFS). At 28 to 804 (STPSIDLTSS…QLAKLLFHEK (777 aa)) the chain is on the lumenal side. N-linked (GlcNAc...) asparagine glycosylation is found at N123, N172, and N268.

It belongs to the chondroitin N-acetylgalactosaminyltransferase family. Interacts with sqv-5. The cofactor is a divalent metal cation. As to expression, expressed in seam cells, the vulval epithelium and in oocytes (at protein level).

It localises to the golgi apparatus. It is found in the golgi stack membrane. The catalysed reaction is 3-O-(beta-D-GlcA-(1-&gt;3)-beta-D-GalNAc-(1-&gt;4)-beta-D-GlcA-(1-&gt;3)-beta-D-Gal-(1-&gt;3)-beta-D-Gal-(1-&gt;4)-beta-D-Xyl)-L-seryl-[protein] + UDP-N-acetyl-alpha-D-galactosamine = 3-O-(beta-D-GalNAc-(1-&gt;4)-beta-D-GlcA-(1-&gt;3)-beta-D-GalNAc-(1-&gt;4)-beta-D-GlcA-(1-&gt;3)-beta-D-Gal-(1-&gt;3)-beta-D-Gal-(1-&gt;4)-beta-D-Xyl)-L-seryl-[protein] + UDP + H(+). The enzyme catalyses 3-O-{beta-D-GlcA-(1-&gt;3)-[beta-D-GalNAc-(1-&gt;4)-beta-D-GlcA-(1-&gt;3)](n)-beta-D-GalNAc-(1-&gt;4)-beta-D-GlcA-(1-&gt;3)-beta-D-Gal-(1-&gt;3)-beta-D-Gal-(1-&gt;4)-beta-D-Xyl}-L-seryl-[protein] + UDP-N-acetyl-alpha-D-galactosamine = 3-O-{[beta-D-GalNAc-(1-&gt;4)-beta-D-GlcA-(1-&gt;3)](n+1)-beta-D-GalNAc-(1-&gt;4)-beta-D-GlcA-(1-&gt;3)-beta-D-Gal-(1-&gt;3)-beta-D-Gal-(1-&gt;4)-beta-D-Xyl}-L-seryl-[protein] + UDP + H(+). It carries out the reaction 3-O-(beta-D-GalNAc-(1-&gt;4)-beta-D-GlcA-(1-&gt;3)-beta-D-Gal-(1-&gt;3)-beta-D-Gal-(1-&gt;4)-beta-D-Xyl)-L-seryl-[protein] + UDP-alpha-D-glucuronate = 3-O-(beta-D-GlcA-(1-&gt;3)-beta-D-GalNAc-(1-&gt;4)-beta-D-GlcA-(1-&gt;3)-beta-D-Gal-(1-&gt;3)-beta-D-Gal-(1-&gt;4)-beta-D-Xyl)-L-seryl-[protein] + UDP + H(+). It catalyses the reaction 3-O-{[beta-D-GalNAc-(1-&gt;4)-beta-D-GlcA-(1-&gt;3)](n)-beta-D-GalNAc-(1-&gt;4)-beta-D-GlcA-(1-&gt;3)-beta-D-Gal-(1-&gt;3)-beta-D-Gal-(1-&gt;4)-beta-D-Xyl}-L-seryl-[protein] + UDP-alpha-D-glucuronate = 3-O-{beta-D-GlcA-(1-&gt;3)-[beta-D-GalNAc-(1-&gt;4)-beta-D-GlcA-(1-&gt;3)](n)-beta-D-GalNAc-(1-&gt;4)-beta-D-GlcA-(1-&gt;3)-beta-D-Gal-(1-&gt;3)-beta-D-Gal-(1-&gt;4)-beta-D-Xyl}-L-seryl-[protein] + UDP + H(+). Its function is as follows. Has both beta-1,3-glucuronic acid and beta-1,4-N-acetylgalactosamine transferase activity. Transfers glucuronic acid (GlcUA) from UDP-GlcUA and N-acetylgalactosamine (GalNAc) from UDP-GalNAc to the non-reducing end of the elongating chondroitin polymer. Required together with sqv-5 for the biosynthesis of chondroitin. Chondroitin is involved in organogenesis of the vulva, maturation of the gonad, and neural development. May have a specific role in unc-6/netrin-mediated dorsal guidance of gonadal distal tip cells. Glycosyltransferase activity is weak. In Caenorhabditis elegans, this protein is Chondroitin sulfate synthase mig-22 (mig-22).